The primary structure comprises 750 residues: DDT domain-containing protein DDR4 (750 aa).

The tract at residues 1–125 (MGSSSDIVPD…ITSLVPPPEP (125 aa)) is disordered. The span at 45–54 (RAQQRLQELQ) shows a compositional bias: low complexity. Residues 55-77 (AAERKLKPPKKEYKREQHRRREE) show a composition bias toward basic and acidic residues. Residues 78 to 100 (VVEEDEDSEDDDQEDEENDGDDE) show a composition bias toward acidic residues. One can recognise a DDT domain in the interval 133–192 (LRSMWELASVLNFLHVFRPLLKINAEFSAEEFETALLTPNDTLSDIHIPLLKAIPPVTRM). 2 disordered regions span residues 450–505 (NGRS…TDFV) and 532–750 (LKKR…TDNS). Residues 451 to 471 (GRSTSSTHPTEPVNDTASGRS) are compositionally biased toward polar residues. The span at 545–585 (EGDEEKGDEEYKWDEDNAEYEEEEEEEEEEDSLSASEEDSD) shows a compositional bias: acidic residues. Residues 595-606 (RRETKLRSRSND) are compositionally biased toward basic and acidic residues. Residues 688-707 (NADTTNGKENNQLNKSNGTT) are compositionally biased toward polar residues. Over residues 741 to 750 (LKDDDKTDNS) the composition is skewed to basic and acidic residues.

In terms of assembly, interacts (via the DDT domain) with CHR11 (via C-terminus).

It is found in the nucleus. Probable transcription regulator. The protein is DDT domain-containing protein DDR4 of Arabidopsis thaliana (Mouse-ear cress).